The chain runs to 85 residues: ATP synthase epsilon chain (85 aa).

The protein belongs to the ATPase epsilon chain family. As to quaternary structure, F-type ATPases have 2 components, CF(1) - the catalytic core - and CF(0) - the membrane proton channel. CF(1) has five subunits: alpha(3), beta(3), gamma(1), delta(1), epsilon(1). CF(0) has three main subunits: a, b and c.

It localises to the cell membrane. Its function is as follows. Produces ATP from ADP in the presence of a proton gradient across the membrane. The sequence is that of ATP synthase epsilon chain from Frankia casuarinae (strain DSM 45818 / CECT 9043 / HFP020203 / CcI3).